The chain runs to 191 residues: Thymidylate kinase (191 aa).

7 to 14 (GVDGVGKS) provides a ligand contact to ATP.

This sequence belongs to the thymidylate kinase family.

The enzyme catalyses dTMP + ATP = dTDP + ADP. In terms of biological role, phosphorylation of dTMP to form dTDP in both de novo and salvage pathways of dTTP synthesis. This is Thymidylate kinase from Helicobacter pylori (strain HPAG1).